Consider the following 1057-residue polypeptide: MERARRLANRATLKRLLSEAKQNRKTESTSTTTTTPLPFSLSGSSSRYVSSVSNSILRGRGSKPDNNVSRRVGGFLGVGYPSQSRSISVEALKPSDTFPRRHNSATPDEQTKMAESVGFDTLDSLVDATVPKSIRLKEMKFNKFDGGLTEGQMIEHMKDLASKNKVFKSFIGMGYYNTHVPPVILRNIMENPAWYTQYTPYQAEISQGRLESLLNFQTMITDLTGLPMSNASLLDEGTAAAEAMSMCNNIQKGKKKTFIIASNCHPQTIDICQTRADGFELKVVVKDLKDIDYKSGDVCGVLVQYPGTEGEVLDYGEFIKKAHANEVKVVMASDLLALTVLKPPGEFGADIVVGSAQRFGVPMGYGGPHAAFLATSQEYKRMMPGRIIGVSVDSSGKQALRMAMQTREQHIRRDKATSNICTAQALLANMAAMYAVYHGPEGLKAIAQRVHGLAGVFALGLKKLGLEVQDLGFFDTVKVKTSNAKAIADAAIKSEINLRVVDGNTITAAFDETTTLEDVDKLFKVFAGGKPVSFTAASLAPEFQNAIPSGLVRESPYLTHPIFNTYQTEHELLRYIHRLQSKDLSLCHSMIPLGSCTMKLNATTEMMPVTWPSFTDLHPFAPTEQAQGYQEMFNNLGDLLCTITGFDSFSLQPNAGAAGEYAGLMVIRAYHLSRGDHHRNVCIIPASAHGTNPASAAMVGMKIVTIGTDAKGNINIEELKKAAEKHKDNLSAFMVTYPSTHGVYEEGIDDICKIIHDNGGQVYMDGANMNAQVGLTSPGWIGADVCHLNLHKTFCIPHGGGGPGMGPIGVKKHLAPFLPSHPVVPTGGIPAPENPQPLGSISAAPWGSALILPISYTYIAMMGSQGLTDASKIAILNANYMAKRLESYYPVLFRGVNGTVAHEFIIDLRGFKNTAGIEPEDVAKRLMDYGFHGPTMSWPVAGTLMIEPTESESKAELDRFCDALISIRKEIAEVEKGNADVHNNVLKGAPHPPSLLMADAWTKPYSREYAAFPAAWLRGAKFWPTTGRVDNVYGDRNLVCTLLPASQAVEEQAAATA.

A mitochondrion-targeting transit peptide spans 1 to 86; that stretch reads MERARRLANR…GVGYPSQSRS (86 aa). Over residues 18–27 the composition is skewed to basic and acidic residues; it reads SEAKQNRKTE. A disordered region spans residues 18-47; the sequence is SEAKQNRKTESTSTTTTTPLPFSLSGSSSR. Over residues 28 to 47 the composition is skewed to low complexity; that stretch reads STSTTTTTPLPFSLSGSSSR. Lys-792 is modified (N6-(pyridoxal phosphate)lysine).

It belongs to the GcvP family. Homodimer. The glycine cleavage system is composed of four proteins: P, T, L and H. Requires pyridoxal 5'-phosphate as cofactor. Highly expressed in leaves. Detected in roots and embryos.

The protein resides in the mitochondrion. The enzyme catalyses N(6)-[(R)-lipoyl]-L-lysyl-[glycine-cleavage complex H protein] + glycine + H(+) = N(6)-[(R)-S(8)-aminomethyldihydrolipoyl]-L-lysyl-[glycine-cleavage complex H protein] + CO2. The glycine cleavage system catalyzes the degradation of glycine. The P protein binds the alpha-amino group of glycine through its pyridoxal phosphate cofactor; CO(2) is released and the remaining methylamine moiety is then transferred to the lipoamide cofactor of the H protein. The chain is Glycine dehydrogenase (decarboxylating), mitochondrial (GDCSP) from Pisum sativum (Garden pea).